The primary structure comprises 189 residues: Thymidine kinase (189 aa).

ATP-binding positions include 9–16 (GTMNSGKT) and 85–88 (DECQ). Glutamate 86 functions as the Proton acceptor in the catalytic mechanism. Residues cysteine 143, cysteine 146, cysteine 180, and histidine 183 each contribute to the Zn(2+) site.

This sequence belongs to the thymidine kinase family. In terms of assembly, homotetramer.

The protein resides in the cytoplasm. The enzyme catalyses thymidine + ATP = dTMP + ADP + H(+). The protein is Thymidine kinase of Streptococcus agalactiae serotype Ia (strain ATCC 27591 / A909 / CDC SS700).